An 867-amino-acid chain; its full sequence is Elongation factor 2 (867 aa).

Residues histidine 17–valine 368 form the tr-type G domain. Alanine 26 to serine 33 provides a ligand contact to GTP. Threonine 57 and threonine 59 each carry phosphothreonine. Residues asparagine 176 to aspartate 179 and serine 231 to leucine 233 each bind GTP. At histidine 723 the chain carries Diphthamide.

Belongs to the TRAFAC class translation factor GTPase superfamily. Classic translation factor GTPase family. EF-G/EF-2 subfamily. In terms of processing, phosphorylation by EF-2 kinase completely inactivates EF-2.

It localises to the cytoplasm. It carries out the reaction GTP + H2O = GDP + phosphate + H(+). In terms of biological role, catalyzes the GTP-dependent ribosomal translocation step during translation elongation. During this step, the ribosome changes from the pre-translocational (PRE) to the post-translocational (POST) state as the newly formed A-site-bound peptidyl-tRNA and P-site-bound deacylated tRNA move to the P and E sites, respectively. Catalyzes the coordinated movement of the two tRNA molecules, the mRNA and conformational changes in the ribosome. The polypeptide is Elongation factor 2 (Blastocystis hominis).